We begin with the raw amino-acid sequence, 1219 residues long: Myosin-5 (1219 aa).

Residues 1–12 are compositionally biased toward basic residues; that stretch reads MAILKRGARKKV. The disordered stretch occupies residues 1 to 20; sequence MAILKRGARKKVHQEPAKRS. The Myosin motor domain maps to 36 to 715; that stretch reads VGVSDLTLLS…TLFALEHMRD (680 aa). 129 to 136 contributes to the ATP binding site; that stretch reads GESGAGKT. The residue at position 357 (Ser-357) is a Phosphoserine. A Phosphotyrosine modification is found at Tyr-359. The actin-binding stretch occupies residues 404–486; the sequence is SIGILDIYGF…PGIFAAMNDS (83 aa). IQ domains follow at residues 719-739 and 740-765; these read HNMA…RIDA and ATKI…YGTK. Residues 771–961 enclose the TH1 domain; the sequence is KERRSMSLLG…TISVRRGNPP (191 aa). Residue Ser-777 is modified to Phosphoserine. Residues 951 to 964 show a composition bias toward polar residues; sequence STISVRRGNPPNSQ. Disordered stretches follow at residues 951-1106 and 1139-1167; these read STIS…SELP and TAYM…VLNS. Positions 974–984 are enriched in low complexity; that stretch reads SISSGYHASSS. Ser-992 is modified (phosphoserine). Residues 1030–1041 show a composition bias toward polar residues; sequence NPASTLTASQSN. The span at 1048-1063 shows a compositional bias: low complexity; that stretch reads TAATRATPAATPAAAA. Over residues 1072–1083 the composition is skewed to pro residues; that stretch reads IPPPPPPPPPSS. The SH3 domain occupies 1085-1147; sequence PKEPMFEAAY…PTAYMKPHSG (63 aa). Ser-1205 bears the Phosphoserine mark.

This sequence belongs to the TRAFAC class myosin-kinesin ATPase superfamily. Myosin family. In terms of assembly, interacts (via myosin motor domain) with SHE4; this interaction is important for proper localization and may regulate the interaction of the motor domain with actin. Interacts (via SH3 domain) with VRP1; this interaction is required for localization to sites of polarized growth and may regulate the interaction of the tail domain with actin. Interacts (via SH3 domain) with PAN1; this interaction is important for late stages of endocytopsis. Interacts (via SH3 domain) with BBC1 and LAS17. Interacts (via C-terminal acidic tail) with ARC19 and ARC40; ARC19 and ARC40 are Arp2/3 complex subunits. Interacts with BZZ1, PKH1, PKH2, YPK1 and YPK2. Post-translationally, phosphorylation of the TEDS site (Ser-357) is required for the polarization of the actin cytoskeleton and for ligand-induced, but not for constitutive internalization of STE2. Phosphorylation probably activates the myosin-I ATPase activity. Ser-357 is phosphorylated by YPK2 in vitro.

The protein resides in the cytoplasm. It localises to the cytoskeleton. It is found in the actin patch. In terms of biological role, one of two redundant type-I myosins implicated in the organization of the actin cytoskeleton. Required for proper actin cytoskeleton polarization and for the internalization step in endocytosis. At the cell cortex, assembles in patch-like structures together with proteins from the actin-polymerizing machinery and promotes actin assembly. Functions redundantly with LAS17 as actin nucleation-promoting factor (NPF) for the Arp2/3 complex. Motor domain phosphorylation by PAK kinases CLA4 and STE20 promotes CDC42-regulated actin assembly. Functions together with the NPF PAN1 in late stages of endocytosis. Motor domain phosphorylation by PDK1 kinases PKH1 and PKH2, and by SGK kinases YPK1 and YPK2, promotes ligand-induced, but not constitutive endocytosis of the G protein-coupled receptor STE2. In Saccharomyces cerevisiae (strain YJM789) (Baker's yeast), this protein is Myosin-5 (MYO5).